The following is a 325-amino-acid chain: Tetraacyldisaccharide 4'-kinase (325 aa).

55–62 is an ATP binding site; the sequence is TAGGNGKT.

The protein belongs to the LpxK family.

The enzyme catalyses a lipid A disaccharide + ATP = a lipid IVA + ADP + H(+). It functions in the pathway glycolipid biosynthesis; lipid IV(A) biosynthesis; lipid IV(A) from (3R)-3-hydroxytetradecanoyl-[acyl-carrier-protein] and UDP-N-acetyl-alpha-D-glucosamine: step 6/6. Functionally, transfers the gamma-phosphate of ATP to the 4'-position of a tetraacyldisaccharide 1-phosphate intermediate (termed DS-1-P) to form tetraacyldisaccharide 1,4'-bis-phosphate (lipid IVA). This is Tetraacyldisaccharide 4'-kinase from Salmonella agona (strain SL483).